A 536-amino-acid chain; its full sequence is MNSNRSLLVMGLLLVSFLIFTQWQQDFNPEIQAQKQAQQQSRDVPHATNTANAITEHMTKGKTITVESDVLRLVIDTLGGDVIESDLLAHKASLDSTDPLKLLTTEGLIYTAQSGLVGKNGIDTHIGRAPYQVTQDHFTLAKGQNEIVVPMTFEQDGVMYTKTFTLKRGSYDVAVSFDIQNNSANTIEVQPYGQIKHSLLDSSGNLAMPTYTGGAYSSSETNYKKYSFDEMTKANLNIDTKGGWVALLQHYFVSAWVPNQDASNTLYSRTHNGVATIGYRGPITTVKPNTKTTITSQLWTGPKDQKEMAQAATHLELTVDYGWAWFIAKPLFWLLIFIHSIIGNWGLAIMGVTLVVKSLLYPLTKAQYTSMAKMRMLQPKLQELRERYGDDRQQMSQEMMKLYKQEKVNPMGGCLPLILQMPIFIALYWTFMEAVELRHAPFFGWIQDLSAQDPYYIFPVLMGLSMFLLQKMSPTAVADPTQLKVMTFMPVIFTVFFLWFPSGLVLYWLTSNCITIVQQWLIYRNLEKKGLHTRKK.

The next 5 membrane-spanning stretches (helical) occupy residues 7 to 27 (LLVM…QQDF), 332 to 352 (FWLL…IMGV), 411 to 431 (MGGC…YWTF), 449 to 469 (LSAQ…MFLL), and 488 to 508 (FMPV…VLYW).

Belongs to the OXA1/ALB3/YidC family. Type 1 subfamily. Interacts with the Sec translocase complex via SecD. Specifically interacts with transmembrane segments of nascent integral membrane proteins during membrane integration.

Its subcellular location is the cell inner membrane. Functionally, required for the insertion and/or proper folding and/or complex formation of integral membrane proteins into the membrane. Involved in integration of membrane proteins that insert both dependently and independently of the Sec translocase complex, as well as at least some lipoproteins. Aids folding of multispanning membrane proteins. The polypeptide is Membrane protein insertase YidC (Haemophilus ducreyi (strain 35000HP / ATCC 700724)).